We begin with the raw amino-acid sequence, 344 residues long: Microcin C7 self-immunity protein MccF (344 aa).

It belongs to the peptidase S66 family.

Its function is as follows. Involved in specific self-immunity to microcin C7. This Escherichia coli protein is Microcin C7 self-immunity protein MccF (mccF).